A 314-amino-acid polypeptide reads, in one-letter code: Regulator of microtubule dynamics protein 1 (314 aa).

At K165 the chain carries N6-succinyllysine. 2 TPR repeats span residues A168–D204 and P222–F258.

Belongs to the RMDN family. Interacts with microtubules.

It localises to the cytoplasm. It is found in the cytoskeleton. The protein resides in the spindle. The protein localises to the spindle pole. The protein is Regulator of microtubule dynamics protein 1 (RMDN1) of Pongo abelii (Sumatran orangutan).